The sequence spans 85 residues: NAD(P)H-quinone oxidoreductase subunit L (85 aa).

Helical transmembrane passes span 17-37 and 54-74; these read IVAV…PGFV and AFMY…SPFL.

The protein belongs to the complex I NdhL subunit family. As to quaternary structure, NDH-1 can be composed of about 15 different subunits; different subcomplexes with different compositions have been identified which probably have different functions.

Its subcellular location is the cellular thylakoid membrane. The enzyme catalyses a plastoquinone + NADH + (n+1) H(+)(in) = a plastoquinol + NAD(+) + n H(+)(out). The catalysed reaction is a plastoquinone + NADPH + (n+1) H(+)(in) = a plastoquinol + NADP(+) + n H(+)(out). In terms of biological role, NDH-1 shuttles electrons from an unknown electron donor, via FMN and iron-sulfur (Fe-S) centers, to quinones in the respiratory and/or the photosynthetic chain. The immediate electron acceptor for the enzyme in this species is believed to be plastoquinone. Couples the redox reaction to proton translocation, and thus conserves the redox energy in a proton gradient. Cyanobacterial NDH-1 also plays a role in inorganic carbon-concentration. The chain is NAD(P)H-quinone oxidoreductase subunit L from Crocosphaera subtropica (strain ATCC 51142 / BH68) (Cyanothece sp. (strain ATCC 51142)).